Here is a 355-residue protein sequence, read N- to C-terminus: 6-aminohexanoate-oligomer endohydrolase (355 aa).

The active-site Nucleophile is Thr-267.

It belongs to the peptidase S58 family. Heterotetramer composed of 4 alpha/beta heterodimers. Exists at the monomer/dimer/trimer equilibrium in aqueous solution. In terms of processing, expressed as an inactive precursor that is cleaved autocatalytically at Asn266/Thr267 to generate an active enzyme composed of an alpha subunit and a beta subunit.

The enzyme catalyses [N-(6-aminohexanoyl)]n + H2O = [N-(6-aminohexanoyl)]n-x + [N-(6-aminohexanoyl)]x.. It participates in xenobiotic degradation; nylon-6 oligomer degradation. Involved in the degradation of nylon-6 oligomers. Degrades cyclic and linear oligomers of 6-aminohexanoate (Ahx) with a degree of polymerization greater than three by an endo-type mode. Cannot use Ahx cyclic dimer or the Ahx linear dimer. The sequence is that of 6-aminohexanoate-oligomer endohydrolase from Paenarthrobacter ureafaciens.